Consider the following 85-residue polypeptide: WAP four-disulfide core domain protein 12 (85 aa).

The first 21 residues, methionine 1–glycine 21, serve as a signal peptide directing secretion. In terms of domain architecture, WAP spans lysine 25–valine 72. Cystine bridges form between cysteine 32–cysteine 60, cysteine 39–cysteine 64, cysteine 47–cysteine 59, and cysteine 53–cysteine 68.

In terms of tissue distribution, constitutively expressed in tongue.

The protein localises to the secreted. Antibacterial protein which inhibits the growth of E.coli and S.aureus. Putative acid-stable proteinase inhibitor. The chain is WAP four-disulfide core domain protein 12 from Mus musculus (Mouse).